The chain runs to 223 residues: Putative NAD(P)H nitroreductase SAB2397c (223 aa).

Belongs to the nitroreductase family. FMN is required as a cofactor.

The polypeptide is Putative NAD(P)H nitroreductase SAB2397c (Staphylococcus aureus (strain bovine RF122 / ET3-1)).